A 552-amino-acid chain; its full sequence is AP-1-like transcription factor (552 aa).

Residues Met1–Ile14 show a composition bias toward polar residues. Positions Met1–Asp99 are disordered. A compositionally biased stretch (basic and acidic residues) spans Pro36–Ser47. Acidic residues predominate over residues Glu48–Asp61. Residues Gly62 to Ser80 show a composition bias toward basic and acidic residues. In terms of domain architecture, bZIP spans Gln76 to Leu139. The Nuclear localization signal signature appears at Lys81–Ala88. Residues Lys81 to Lys102 form a basic motif region. The tract at residues Leu104–Leu111 is leucine-zipper. The interval Gln213–Leu244 is disordered. Residues Val219–Leu228 show a composition bias toward polar residues. A compositionally biased stretch (low complexity) spans Ser229–Ser240. The tract at residues Cys259–Cys290 is n-CRD. Intrachain disulfides connect Cys278–Cys501 and Cys285–Cys532. A disordered region spans residues Ile460–Glu489. Residues Cys501 to Cys532 form a c-CRD region. The short motif at Glu515–Ser533 is the Nuclear export signal element.

Belongs to the bZIP family. YAP subfamily. As to quaternary structure, homodimer. The reduced form of pap1 interacts in the nucleus with the nuclear export protein crm1, and in the cytoplasm with the peroxiredoxin tpx1. In terms of processing, depending on the oxidative stress inducing agent, pap1 can undergo two distinct conformational changes, both masking the nuclear export signal, thus abolishing nuclear export by crm1/exportin 1. The glutathione-depleting agent diethylmaleate (DEM) leads to the non-reversible modification of at least 2 cysteine residues in the c-CRD. Peroxide stress induces the formation of a tpx1-dependent interdomain disulfide bond between Cys-278 and Cys-501.

The protein resides in the nucleus. It is found in the cytoplasm. Functionally, transcription activator involved in multidrug resistance, oxidative stress response, and redox homeostasis. Regulates the transcription of genes encoding antioxidant enzymes like catalase ctt1 and components of the cellular thiol-reducing pathways, including the thioredoxin system (trx2, trr1), ABC transporters involved in multidrug resistance like bfr1/hba2 and pmd1 as well as the gene obr1/apt1. Preferentially binds to promoters with the core binding site 5'-TTA[CG]TAA-3'. Activity of the transcription factor is controlled through oxidation of specific cysteine residues resulting in the alteration of its subcellular location. Oxidative stress induces nuclear accumulation and as a result pap1 transcriptional activity. Required for sty1/spc1-conferred staurosporine resistance. The chain is AP-1-like transcription factor (pap1) from Schizosaccharomyces pombe (strain 972 / ATCC 24843) (Fission yeast).